Consider the following 432-residue polypeptide: Histidine--tRNA ligase (432 aa).

The protein belongs to the class-II aminoacyl-tRNA synthetase family. In terms of assembly, homodimer.

It localises to the cytoplasm. The catalysed reaction is tRNA(His) + L-histidine + ATP = L-histidyl-tRNA(His) + AMP + diphosphate + H(+). This is Histidine--tRNA ligase from Symbiobacterium thermophilum (strain DSM 24528 / JCM 14929 / IAM 14863 / T).